A 620-amino-acid chain; its full sequence is uncharacterized protein (620 aa).

Residues 324–586 (RRYVTIAIIK…HPWEKGIYPT (263 aa)) form the Radical SAM core domain. The [4Fe-4S] cluster site is built by C338, C342, and C345. K552 carries the post-translational modification N6-(pyridoxal phosphate)lysine.

The protein belongs to the radical SAM superfamily. KamA family. The cofactor is [4Fe-4S] cluster. It depends on pyridoxal 5'-phosphate as a cofactor.

This is an uncharacterized protein from Methanocaldococcus jannaschii (strain ATCC 43067 / DSM 2661 / JAL-1 / JCM 10045 / NBRC 100440) (Methanococcus jannaschii).